A 572-amino-acid chain; its full sequence is NADP-dependent malic enzyme (572 aa).

Position 1 is an N-acetylmethionine (M1). Residue Y102 is the Proton donor of the active site. Position 155 (R155) interacts with NADP(+). K173 acts as the Proton acceptor in catalysis. Residues E245, D246, and D269 each coordinate a divalent metal cation. NADP(+) contacts are provided by residues D269 and G301–E318. S336 carries the post-translational modification Phosphoserine.

The protein belongs to the malic enzymes family. Homotetramer. Requires Mg(2+) as cofactor. The cofactor is Mn(2+).

It localises to the cytoplasm. The enzyme catalyses (S)-malate + NADP(+) = pyruvate + CO2 + NADPH. It catalyses the reaction oxaloacetate + H(+) = pyruvate + CO2. Its function is as follows. Catalyzes the oxidative decarboxylation of (S)-malate in the presence of NADP(+) and divalent metal ions, and decarboxylation of oxaloacetate. This is NADP-dependent malic enzyme (Me1) from Mus musculus (Mouse).